We begin with the raw amino-acid sequence, 512 residues long: NAD(P)H-quinone oxidoreductase subunit 2 B, chloroplastic (512 aa).

A run of 14 helical transmembrane segments spans residues 31 to 51 (FIFP…IDLT), 57 to 77 (IPWL…ALLF), 99 to 119 (IFQF…VEYI), 124 to 144 (MAIT…MFLC), 149 to 169 (LITI…LSGY), 183 to 203 (YLLM…WLYG), 229 to 249 (ISIA…LAPF), 261 to 281 (PTPV…ALAT), 295 to 315 (WHLL…LIAI), 323 to 343 (MLAY…IVGD), 354 to 374 (YMLF…LFGL), 395 to 415 (ALSL…AGFF), 418 to 438 (LYLF…IGLL), and 484 to 504 (MIVC…IIAI).

The protein belongs to the complex I subunit 2 family. As to quaternary structure, NDH is composed of at least 16 different subunits, 5 of which are encoded in the nucleus.

It is found in the plastid. It localises to the chloroplast thylakoid membrane. It carries out the reaction a plastoquinone + NADH + (n+1) H(+)(in) = a plastoquinol + NAD(+) + n H(+)(out). The enzyme catalyses a plastoquinone + NADPH + (n+1) H(+)(in) = a plastoquinol + NADP(+) + n H(+)(out). NDH shuttles electrons from NAD(P)H:plastoquinone, via FMN and iron-sulfur (Fe-S) centers, to quinones in the photosynthetic chain and possibly in a chloroplast respiratory chain. The immediate electron acceptor for the enzyme in this species is believed to be plastoquinone. Couples the redox reaction to proton translocation, and thus conserves the redox energy in a proton gradient. This chain is NAD(P)H-quinone oxidoreductase subunit 2 B, chloroplastic, found in Arabidopsis thaliana (Mouse-ear cress).